Reading from the N-terminus, the 658-residue chain is Glycogen debranching enzyme (658 aa).

Catalysis depends on Asp336, which acts as the Nucleophile. Glu371 serves as the catalytic Proton donor. The interval 459 to 484 (EANGEENRDGTNSNYSDNHGKEGLGG) is disordered.

The protein belongs to the glycosyl hydrolase 13 family.

The enzyme catalyses Hydrolysis of (1-&gt;6)-alpha-D-glucosidic linkages to branches with degrees of polymerization of three or four glucose residues in limit dextrin.. The protein operates within glycan degradation; glycogen degradation. Removes maltotriose and maltotetraose chains that are attached by 1,6-alpha-linkage to the limit dextrin main chain, generating a debranched limit dextrin. This is Glycogen debranching enzyme from Salmonella paratyphi A (strain ATCC 9150 / SARB42).